The chain runs to 527 residues: MSKDHKDKKRKHSDEATEEVEKKTKVSKKEKKDKKEKKEKKDKKEKKDKSEKKDKSEKKEKKEKKESEDVPTKSSAVVSTGYSQSPALTKLPQSEIDSFLQENEVTVEDPHNLGLRPLLGFDQIDLDSRIASVISKFPTPTPIQAVSWPYLLSGKDVIGVAETGSGKTFAFGVPAINNILTHDKKGLKVLCISPTRELALQIYDNLVDLTANTPLKCVAVYGGVSKHEQVSSLRNASVVVATPGRLIDLLNDGALSLDSIEYLVLDEADRMLEKGFEQDIKSVMQQTNHANRQTLMFTATWPKEVRELASTFMNSPVKVSIGDRNELSANKRITQIVEVIEPYDKEKKLLSLLRKYQSGSNKDDKVLIFALYKKEATRIENLLVRNSFKVSAVHGDLSQQQRTSALGAFKAGKTTLLLATDVAARGLDIPNVKVVINLTFPLTVEDYVHRIGRTGRAGQTGIAHTLFTEHEKHLSGALMNVLRGANQPVPDELLKFGGHTKKKAHSAYGAFFKDVDMTKTAKKIKFD.

The span at 1-11 (MSKDHKDKKRK) shows a compositional bias: basic residues. The tract at residues 1–89 (MSKDHKDKKR…TGYSQSPALT (89 aa)) is disordered. Positions 12–24 (HSDEATEEVEKKT) are enriched in basic and acidic residues. Basic residues predominate over residues 25 to 44 (KVSKKEKKDKKEKKEKKDKK). Residues 45–71 (EKKDKSEKKDKSEKKEKKEKKESEDVP) are compositionally biased toward basic and acidic residues. Polar residues predominate over residues 72 to 89 (TKSSAVVSTGYSQSPALT). The Q motif motif lies at 119–145 (LGFDQIDLDSRIASVISKFPTPTPIQA). Residues 148-319 (WPYLLSGKDV…STFMNSPVKV (172 aa)) form the Helicase ATP-binding domain. ATP is bound at residue 161–168 (AETGSGKT). Residues 266–269 (DEAD) carry the DEAD box motif. One can recognise a Helicase C-terminal domain in the interval 348–497 (KLLSLLRKYQ…PVPDELLKFG (150 aa)).

It belongs to the DEAD box helicase family. DDX5/DBP2 subfamily.

The protein localises to the nucleus. Its subcellular location is the nucleolus. It carries out the reaction ATP + H2O = ADP + phosphate + H(+). Its function is as follows. ATP-dependent RNA helicase required for 60S ribosomal subunit synthesis. Involved in efficient pre-rRNA processing, predominantly at site A3, which is necessary for the normal formation of 25S and 5.8S rRNAs. This is ATP-dependent RNA helicase DBP3 (DBP3) from Debaryomyces hansenii (strain ATCC 36239 / CBS 767 / BCRC 21394 / JCM 1990 / NBRC 0083 / IGC 2968) (Yeast).